The chain runs to 172 residues: 3-hydroxydecanoyl-[acyl-carrier-protein] dehydratase (172 aa).

His71 is a catalytic residue.

This sequence belongs to the thioester dehydratase family. FabA subfamily. Homodimer.

It is found in the cytoplasm. The catalysed reaction is a (3R)-hydroxyacyl-[ACP] = a (2E)-enoyl-[ACP] + H2O. It carries out the reaction (3R)-hydroxydecanoyl-[ACP] = (2E)-decenoyl-[ACP] + H2O. The enzyme catalyses (2E)-decenoyl-[ACP] = (3Z)-decenoyl-[ACP]. It functions in the pathway lipid metabolism; fatty acid biosynthesis. In terms of biological role, necessary for the introduction of cis unsaturation into fatty acids. Catalyzes the dehydration of (3R)-3-hydroxydecanoyl-ACP to E-(2)-decenoyl-ACP and then its isomerization to Z-(3)-decenoyl-ACP. Can catalyze the dehydratase reaction for beta-hydroxyacyl-ACPs with saturated chain lengths up to 16:0, being most active on intermediate chain length. This is 3-hydroxydecanoyl-[acyl-carrier-protein] dehydratase from Enterobacter sp. (strain 638).